The following is a 563-amino-acid chain: Adenine deaminase (563 aa).

The protein belongs to the metallo-dependent hydrolases superfamily. Adenine deaminase family. Mn(2+) serves as cofactor.

It carries out the reaction adenine + H2O + H(+) = hypoxanthine + NH4(+). The chain is Adenine deaminase from Brucella anthropi (strain ATCC 49188 / DSM 6882 / CCUG 24695 / JCM 21032 / LMG 3331 / NBRC 15819 / NCTC 12168 / Alc 37) (Ochrobactrum anthropi).